Consider the following 678-residue polypeptide: GAS2-like protein 1 (678 aa).

At Ala2 the chain carries N-acetylalanine. The region spanning 27-148 (EAMKEDLADW…CLLEVARRGA (122 aa)) is the Calponin-homology (CH) domain. A GAR domain is found at 203-275 (NDLRNLDELV…HYLDKHDPCR (73 aa)). Over residues 276–291 (CSSSTHRLPQQRTGTF) the composition is skewed to polar residues. Disordered stretches follow at residues 276–524 (CSSS…FRRL) and 538–678 (AASH…DSSM). Ser306 and Ser316 each carry phosphoserine. A compositionally biased stretch (basic and acidic residues) spans 327–340 (GTKEGPETPLRPRD). Phosphothreonine is present on Thr334. Phosphoserine is present on residues Ser352 and Ser355. A compositionally biased stretch (low complexity) spans 354-365 (DSDSSASSAQSG). Over residues 370-381 (RSDDSATGSRRE) the composition is skewed to basic and acidic residues. Residues 392 to 403 (PASPRRPTAPRS) are compositionally biased toward low complexity. Ser394 is subject to Phosphoserine. A compositionally biased stretch (basic and acidic residues) spans 404 to 413 (QSRDRLDRGR). Ser436 and Ser438 each carry phosphoserine. Basic and acidic residues predominate over residues 437 to 454 (QSREEQAVLMVRRDRDGQ). Gly residues predominate over residues 461-471 (GRGGGGSGGSG). Ser482 and Ser489 each carry phosphoserine. Pro residues predominate over residues 485–495 (APRPSRGPSPG). Arg490 bears the Omega-N-methylarginine mark. At Ser493 the chain carries Phosphoserine. At Thr501 the chain carries Phosphothreonine. Arg507 is modified (omega-N-methylarginine). Composition is skewed to low complexity over residues 509-519 (PLQLDPQQEQQ) and 554-568 (DSAYCSSSSSSSSLS). Position 630 is an omega-N-methylarginine (Arg630). Over residues 631–641 (GRMDTQPDRKP) the composition is skewed to basic and acidic residues. Ser654 bears the Phosphoserine mark. The segment covering 666-678 (HSVTPRTEPDSSM) has biased composition (polar residues).

Belongs to the GAS2 family. Interacts with MAPRE1.

The protein resides in the cytoplasm. The protein localises to the cytoskeleton. It localises to the stress fiber. In terms of biological role, seems to be involved in the cross-linking of microtubules and microfilaments. Regulates microtubule dynamics and stability by interacting with microtubule plus-end tracking proteins, such as MAPRE1, to regulate microtubule growth along actin stress fibers. This is GAS2-like protein 1 (Gas2l1) from Mus musculus (Mouse).